A 542-amino-acid polypeptide reads, in one-letter code: Bifunctional pantoate ligase/cytidylate kinase (542 aa).

Positions 1-280 (MHWLRTVAAL…VGQTRLIDNL (280 aa)) are pantoate--beta-alanine ligase. An ATP-binding site is contributed by 28-35 (MGSLHEGH). The active-site Proton donor is the His-35. Gln-59 provides a ligand contact to (R)-pantoate. Gln-59 is a beta-alanine binding site. An ATP-binding site is contributed by 150 to 153 (GQKD). Gln-156 serves as a coordination point for (R)-pantoate. ATP is bound by residues Val-179 and 187-190 (CSSR). Residues 281–542 (LLSPEQGDPL…ERSGPARLDQ (262 aa)) are cytidylate kinase. Residues 287–311 (GDPLPERVQHAAPPSSGTTSPPRRP) are disordered.

In the N-terminal section; belongs to the pantothenate synthetase family. It in the C-terminal section; belongs to the cytidylate kinase family. Type 1 subfamily.

It localises to the cytoplasm. It catalyses the reaction (R)-pantoate + beta-alanine + ATP = (R)-pantothenate + AMP + diphosphate + H(+). The enzyme catalyses CMP + ATP = CDP + ADP. It carries out the reaction dCMP + ATP = dCDP + ADP. It participates in cofactor biosynthesis; (R)-pantothenate biosynthesis; (R)-pantothenate from (R)-pantoate and beta-alanine: step 1/1. Its function is as follows. Catalyzes the condensation of pantoate with beta-alanine in an ATP-dependent reaction via a pantoyl-adenylate intermediate. Functionally, catalyzes the transfer of a phosphate group from ATP to either CMP or dCMP to form CDP or dCDP and ADP, respectively. The polypeptide is Bifunctional pantoate ligase/cytidylate kinase (Synechococcus sp. (strain JA-2-3B'a(2-13)) (Cyanobacteria bacterium Yellowstone B-Prime)).